The chain runs to 468 residues: Cytochrome bd ubiquinol oxidase subunit 1 (468 aa).

9 helical membrane-spanning segments follow: residues 15 to 35, 51 to 71, 95 to 115, 124 to 144, 177 to 197, 219 to 239, 331 to 351, 366 to 386, and 416 to 436; these read TLFHFLFVPMSIGLVFMVALM, AKFWGHLFLINFAVGVVTGIL, LAIEALLAFFMESIFIGLWIF, IHALCIWLVSFGTIMSSFWIL, LWVEFPHVIFGALATGAFFIA, LAMIVGLCAGLGVGLSGHMQA, FRIMVGAGVVMILAALGGLWL, IMIALISFPFLANSAGWIMTE, and SIIAFGVMYMILGALLVFLFI. H18 serves as a coordination point for heme b. H183 provides a ligand contact to heme b. M334 contacts heme b. The tract at residues 448 to 468 is disordered; it reads HHDVPVSTDPFSQEVYHGISS.

This sequence belongs to the cytochrome ubiquinol oxidase subunit 1 family. Heterodimer of subunits I and II. Requires heme b as cofactor. The cofactor is heme d cis-diol.

The protein resides in the cell membrane. The catalysed reaction is 2 a ubiquinol + O2(in) + 4 H(+)(in) = 2 a ubiquinone + 2 H2O(in) + 4 H(+)(out). This Bacillus subtilis (strain 168) protein is Cytochrome bd ubiquinol oxidase subunit 1 (cydA).